The following is a 168-amino-acid chain: DAZ-associated protein 2 (168 aa).

Over residues 1–13 (MNSKGQYPTQPTY) the composition is skewed to low complexity. Residues 1 to 25 (MNSKGQYPTQPTYPVQPPGNPVYPQ) are disordered. The PPAY signature appears at 39 to 42 (PPAY). Position 77 is a phosphoserine (S77).

Interacts with SOX6. Interacts with DAZ1 and DAZL. Interacts with IL17RB. May interact with FAM168B. Interacts with INCA1. Interacts with EIF4G1 and EIF4G2. Interacts (via PPAY motif) with NEDD4 (via WW domains). Interacts with transcription factor TCF4; the interaction results in localization of DAZAP2 to the nucleus. Interacts with transcription factors TCF7 and TCF7L1. Interacts with transcription factor LEF1. Interacts with serine/threonine-protein kinase HIPK2; the interaction results in phosphorylation of DAZAP2 which causes localization of DAZAP2 to the nucleus, reduces interaction of DAZAP2 with HIPK2 and prevents DAZAP2-dependent degradation of HIPK2. Interacts with ubiquitin ligase SIAH1; the interaction is decreased following phosphorylation of DAZAP2 by HIPK2. Interacts with TP53; the interaction is triggered by DNA damage. In terms of processing, ubiquitinated by SMURF2, leading to proteasomal degradation. Ubiquitinated by NEDD4, leading to proteasomal degradation. Post-translationally, following DNA damage, phosphorylated by HIPK2 which promotes DAZAP2 localization to the nucleus, reduces interaction of DAZAP2 with HIPK2 and SIAH1, and prevents DAZAP2-dependent ubiquitination of HIPK2 by E3 ubiquitin-protein ligase SIAH1 and subsequent HIPK2 proteasomal degradation.

The protein localises to the cytoplasm. It localises to the nucleus. The protein resides in the nucleus speckle. Its subcellular location is the nuclear body. It is found in the stress granule. Functionally, in unstressed cells, promotes SIAH1-mediated polyubiquitination and degradation of the serine/threonine-protein kinase HIPK2, probably by acting as a loading factor that potentiates complex formation between HIPK2 and ubiquitin ligase SIAH1. In response to DNA damage, localizes to the nucleus following phosphorylation by HIPK2 and modulates the expression of a subset of TP53/p53 target genes by binding to TP53 at target gene promoters. This limits the expression of a number of cell death-mediating TP53 target genes, reducing DNA damage-induced cell death. Enhances the binding of transcription factor TCF7L2/TCF4, a Wnt signaling pathway effector, to the promoters of target genes. Plays a role in stress granule formation. This Rattus norvegicus (Rat) protein is DAZ-associated protein 2.